We begin with the raw amino-acid sequence, 593 residues long: Protein GAMETE EXPRESSED 1 (593 aa).

Positions 1-24 (MDRFSRKCLLFLLLIILLDSPLTC) are cleaved as a signal peptide. Residues 25-427 (HSWGWFSSSS…LHNAMLLESR (403 aa)) are Extracellular-facing. Coiled coils occupy residues 156–194 (CQQLQSNAFKNEIERLVNELKNTAQYTEDKLDILESKSD) and 350–387 (EALQESRNTLQRLKEFSQEQQEDLAKRQEKLQEVHDHL). The chain crosses the membrane as a helical span at residues 428–448 (VIKAFVIYFLSIFVIYMFTST). Residues 449-457 (KQTYIIRPR) lie on the Cytoplasmic side of the membrane. Residues 458–476 (LYIGLCVTLALEVASLRYV) form a helical membrane-spanning segment. Topologically, residues 477 to 485 (NDTERQAWM) are extracellular. A helical transmembrane segment spans residues 486 to 506 (INLIRSLFALLASAQLLHAAL). At 507–593 (SYRDYEVLNH…TRRLYNFRPR (87 aa)) the chain is on the cytoplasmic side.

Homodimer. In terms of tissue distribution, in tricellular pollen, expressed in mature sperm cells. Not expressed in bicellular or unicellular pollen. Detected in ovules, roots and guard cells. Expressed in the embryo sac before cellularization, in the egg cell after cellularization, in the zygote/embryo immediately after fertilization and in the pollen vegetative cell.

The protein localises to the cell membrane. Its function is as follows. Has a dual function during gametophyte development and early embryogenesis. Required for correct pollen maturation. The protein is Protein GAMETE EXPRESSED 1 (GEX1) of Arabidopsis thaliana (Mouse-ear cress).